The primary structure comprises 264 residues: Thymidylate synthase (264 aa).

Residues Arg21 and 126–127 (RR) contribute to the dUMP site. Cys146 (nucleophile) is an active-site residue. DUMP-binding positions include 166 to 169 (RSAD), Asn177, and 207 to 209 (HLY). Asp169 contributes to the (6R)-5,10-methylene-5,6,7,8-tetrahydrofolate binding site. Residue Ala263 participates in (6R)-5,10-methylene-5,6,7,8-tetrahydrofolate binding.

The protein belongs to the thymidylate synthase family. Bacterial-type ThyA subfamily. In terms of assembly, homodimer.

The protein localises to the cytoplasm. It carries out the reaction dUMP + (6R)-5,10-methylene-5,6,7,8-tetrahydrofolate = 7,8-dihydrofolate + dTMP. The protein operates within pyrimidine metabolism; dTTP biosynthesis. In terms of biological role, catalyzes the reductive methylation of 2'-deoxyuridine-5'-monophosphate (dUMP) to 2'-deoxythymidine-5'-monophosphate (dTMP) while utilizing 5,10-methylenetetrahydrofolate (mTHF) as the methyl donor and reductant in the reaction, yielding dihydrofolate (DHF) as a by-product. This enzymatic reaction provides an intracellular de novo source of dTMP, an essential precursor for DNA biosynthesis. The sequence is that of Thymidylate synthase from Halorhodospira halophila (strain DSM 244 / SL1) (Ectothiorhodospira halophila (strain DSM 244 / SL1)).